A 203-amino-acid polypeptide reads, in one-letter code: Protein-methionine-sulfoxide reductase heme-binding subunit MsrQ (203 aa).

The next 5 helical transmembrane spans lie at 13–33 (IAIW…INLG), 79–99 (LLGL…SILE), 116–136 (PYLT…LTST), 147–167 (WQKL…HYLW), and 169–189 (VKTL…LLLL).

It belongs to the MsrQ family. Heterodimer of a catalytic subunit (MsrP) and a heme-binding subunit (MsrQ). FMN serves as cofactor. It depends on heme b as a cofactor.

The protein resides in the cell inner membrane. Its function is as follows. Part of the MsrPQ system that repairs oxidized periplasmic proteins containing methionine sulfoxide residues (Met-O), using respiratory chain electrons. Thus protects these proteins from oxidative-stress damage caused by reactive species of oxygen and chlorine generated by the host defense mechanisms. MsrPQ is essential for the maintenance of envelope integrity under bleach stress, rescuing a wide series of structurally unrelated periplasmic proteins from methionine oxidation. MsrQ provides electrons for reduction to the reductase catalytic subunit MsrP, using the quinone pool of the respiratory chain. This chain is Protein-methionine-sulfoxide reductase heme-binding subunit MsrQ, found in Yersinia pseudotuberculosis serotype O:1b (strain IP 31758).